Consider the following 721-residue polypeptide: Sodium/hydrogen exchanger 6 (721 aa).

A disordered region spans residues 1 to 44 (MTSPKPWARSAGSCQTQRAVRTRKKECREEGESDTEKGPAASSA). The span at 26-37 (ECREEGESDTEK) shows a compositional bias: basic and acidic residues. 12 helical membrane passes run 91–111 (SANLLIFILLLTLTILTIWLF), 123–143 (GLAMIYGLLVGLVLRYGIHVP), 196–216 (VTFDPEVFFNILLPPIIFYAG), 231–251 (ILAYAFLGTAISCFVIGSIMY), 272–292 (CLLFGAIVSATDPVTVLAIFH), 298–318 (VELYALLFGESVLNDAVAIVL), 344–364 (IGIFLGIFSGSFAMGAATGVV), 388–412 (MSWSTFLLAEAWGFTGVVAVLFCGI), 434–454 (FELLNFLAENFIFSYMGLTLF), 456–476 (FQNHVFNPTFVVGAFIAIFLG), 499–519 (NFQHMMMFAGLRGAMAFALAI), and 535–555 (LLIVFFTVWVFGGGTTAMLSC).

The protein belongs to the monovalent cation:proton antiporter 1 (CPA1) transporter (TC 2.A.36) family. Homodimer. Interacts with RACK1; regulates the distribution of SLC9A6 between endosomes and the plasma membrane. Post-translationally, ubiquitinated (in vitro). Glycosylated.

It localises to the endosome membrane. The protein resides in the recycling endosome membrane. The protein localises to the early endosome membrane. It is found in the late endosome membrane. Its subcellular location is the cell membrane. It catalyses the reaction Na(+)(in) + H(+)(out) = Na(+)(out) + H(+)(in). The catalysed reaction is K(+)(in) + H(+)(out) = K(+)(out) + H(+)(in). Its function is as follows. Endosomal Na(+), K(+)/H(+) antiporter. Mediates the electroneutral exchange of endosomal luminal H(+) for a cytosolic Na(+) or K(+). By facilitating proton efflux, SLC9A6 counteracts the acidity generated by vacuolar (V)-ATPase, thereby limiting luminal acidification. Responsible for alkalizing and maintaining the endosomal pH, and consequently in, e.g., endosome maturation and trafficking of recycling endosomal cargo. Plays a critical role during neurodevelopment by regulating synaptic development and plasticity. Implicated in the maintenance of cell polarity in a manner that is dependent on its ability to modulate intravesicular pH. Regulates intracelular pH in some specialized cells, osteoclasts and stereocilia where this transporter localizes to the plasma membrane. This Rattus norvegicus (Rat) protein is Sodium/hydrogen exchanger 6.